A 382-amino-acid polypeptide reads, in one-letter code: Pyrimidine monooxygenase RutA (382 aa).

FMN contacts are provided by residues I68–K69, N134, E143, R159–Y160, and S209.

The protein belongs to the NtaA/SnaA/DszA monooxygenase family. RutA subfamily.

The enzyme catalyses uracil + FMNH2 + NADH + O2 = (Z)-3-ureidoacrylate + FMN + NAD(+) + H2O + H(+). The catalysed reaction is thymine + FMNH2 + NADH + O2 = (Z)-2-methylureidoacrylate + FMN + NAD(+) + H2O + H(+). Its function is as follows. Catalyzes the pyrimidine ring opening between N-3 and C-4 by an unusual flavin hydroperoxide-catalyzed mechanism, adding oxygen atoms in the process to yield ureidoacrylate peracid, that immediately reacts with FMN forming ureidoacrylate and FMN-N(5)-oxide. The FMN-N(5)-oxide reacts spontaneously with NADH to produce FMN. Requires the flavin reductase RutF to regenerate FMN in vivo. This chain is Pyrimidine monooxygenase RutA, found in Escherichia coli (strain B / BL21-DE3).